Consider the following 318-residue polypeptide: Biotin synthase (318 aa).

Positions 40-260 (DDIQKASLLS…VATARIIMPL (221 aa)) constitute a Radical SAM core domain. Residues Cys55, Cys59, and Cys62 each contribute to the [4Fe-4S] cluster site. 4 residues coordinate [2Fe-2S] cluster: Cys100, Cys132, Cys192, and Arg264.

The protein belongs to the radical SAM superfamily. Biotin synthase family. As to quaternary structure, homodimer. Requires [4Fe-4S] cluster as cofactor. [2Fe-2S] cluster is required as a cofactor.

It carries out the reaction (4R,5S)-dethiobiotin + (sulfur carrier)-SH + 2 reduced [2Fe-2S]-[ferredoxin] + 2 S-adenosyl-L-methionine = (sulfur carrier)-H + biotin + 2 5'-deoxyadenosine + 2 L-methionine + 2 oxidized [2Fe-2S]-[ferredoxin]. It participates in cofactor biosynthesis; biotin biosynthesis; biotin from 7,8-diaminononanoate: step 2/2. Catalyzes the conversion of dethiobiotin (DTB) to biotin by the insertion of a sulfur atom into dethiobiotin via a radical-based mechanism. The chain is Biotin synthase from Ruegeria pomeroyi (strain ATCC 700808 / DSM 15171 / DSS-3) (Silicibacter pomeroyi).